The sequence spans 257 residues: 3-deoxy-manno-octulosonate cytidylyltransferase (257 aa).

The protein belongs to the KdsB family.

It is found in the cytoplasm. The catalysed reaction is 3-deoxy-alpha-D-manno-oct-2-ulosonate + CTP = CMP-3-deoxy-beta-D-manno-octulosonate + diphosphate. The protein operates within nucleotide-sugar biosynthesis; CMP-3-deoxy-D-manno-octulosonate biosynthesis; CMP-3-deoxy-D-manno-octulosonate from 3-deoxy-D-manno-octulosonate and CTP: step 1/1. Its pathway is bacterial outer membrane biogenesis; lipopolysaccharide biosynthesis. Its function is as follows. Activates KDO (a required 8-carbon sugar) for incorporation into bacterial lipopolysaccharide in Gram-negative bacteria. The polypeptide is 3-deoxy-manno-octulosonate cytidylyltransferase (Methylococcus capsulatus (strain ATCC 33009 / NCIMB 11132 / Bath)).